Here is a 452-residue protein sequence, read N- to C-terminus: Maltoporin (452 aa).

The N-terminal stretch at 1–25 is a signal peptide; the sequence is MMITLRKLPLAVAVAAGVMSAQAMA.

The protein belongs to the porin LamB (TC 1.B.3) family. Homotrimer formed of three 18-stranded antiparallel beta-barrels, containing three independent channels.

The protein resides in the cell outer membrane. The enzyme catalyses beta-maltose(in) = beta-maltose(out). Involved in the transport of maltose and maltodextrins. The sequence is that of Maltoporin from Salmonella choleraesuis (strain SC-B67).